The chain runs to 141 residues: Nucleoside diphosphate kinase (141 aa).

The ATP site is built by lysine 9, phenylalanine 57, arginine 85, threonine 91, arginine 102, and asparagine 112. Histidine 115 functions as the Pros-phosphohistidine intermediate in the catalytic mechanism.

The protein belongs to the NDK family. In terms of assembly, homotetramer. Requires Mg(2+) as cofactor.

The protein localises to the cytoplasm. It carries out the reaction a 2'-deoxyribonucleoside 5'-diphosphate + ATP = a 2'-deoxyribonucleoside 5'-triphosphate + ADP. The enzyme catalyses a ribonucleoside 5'-diphosphate + ATP = a ribonucleoside 5'-triphosphate + ADP. Functionally, major role in the synthesis of nucleoside triphosphates other than ATP. The ATP gamma phosphate is transferred to the NDP beta phosphate via a ping-pong mechanism, using a phosphorylated active-site intermediate. This chain is Nucleoside diphosphate kinase, found in Prosthecochloris aestuarii (strain DSM 271 / SK 413).